A 602-amino-acid chain; its full sequence is Elongation factor 4 (602 aa).

Residues 2-184 (KKIRNFAIIA…RIVRDIPPPK (183 aa)) enclose the tr-type G domain. Residues 14 to 19 (DHGKST) and 131 to 134 (NKID) each bind GTP.

Belongs to the TRAFAC class translation factor GTPase superfamily. Classic translation factor GTPase family. LepA subfamily.

Its subcellular location is the cell membrane. It carries out the reaction GTP + H2O = GDP + phosphate + H(+). Functionally, required for accurate and efficient protein synthesis under certain stress conditions. May act as a fidelity factor of the translation reaction, by catalyzing a one-codon backward translocation of tRNAs on improperly translocated ribosomes. Back-translocation proceeds from a post-translocation (POST) complex to a pre-translocation (PRE) complex, thus giving elongation factor G a second chance to translocate the tRNAs correctly. Binds to ribosomes in a GTP-dependent manner. The chain is Elongation factor 4 from Baumannia cicadellinicola subsp. Homalodisca coagulata.